Here is a 492-residue protein sequence, read N- to C-terminus: UDP-N-acetylmuramoyl-L-alanyl-D-glutamate--2,6-diaminopimelate ligase (492 aa).

A UDP-N-acetyl-alpha-D-muramoyl-L-alanyl-D-glutamate-binding site is contributed by S21. Position 98-104 (98-104 (GTNGKSS)) interacts with ATP. UDP-N-acetyl-alpha-D-muramoyl-L-alanyl-D-glutamate is bound by residues 144–145 (TT), S171, Q177, and R179. An N6-carboxylysine modification is found at K211. Residues R372, 396–399 (DNPR), G446, and E450 each bind meso-2,6-diaminopimelate. Positions 396 to 399 (DNPR) match the Meso-diaminopimelate recognition motif motif.

The protein belongs to the MurCDEF family. MurE subfamily. Mg(2+) serves as cofactor. Carboxylation is probably crucial for Mg(2+) binding and, consequently, for the gamma-phosphate positioning of ATP.

The protein localises to the cytoplasm. It carries out the reaction UDP-N-acetyl-alpha-D-muramoyl-L-alanyl-D-glutamate + meso-2,6-diaminopimelate + ATP = UDP-N-acetyl-alpha-D-muramoyl-L-alanyl-gamma-D-glutamyl-meso-2,6-diaminopimelate + ADP + phosphate + H(+). The protein operates within cell wall biogenesis; peptidoglycan biosynthesis. Its function is as follows. Catalyzes the addition of meso-diaminopimelic acid to the nucleotide precursor UDP-N-acetylmuramoyl-L-alanyl-D-glutamate (UMAG) in the biosynthesis of bacterial cell-wall peptidoglycan. The chain is UDP-N-acetylmuramoyl-L-alanyl-D-glutamate--2,6-diaminopimelate ligase from Rickettsia typhi (strain ATCC VR-144 / Wilmington).